The following is a 33-amino-acid chain: Brevinin-2PTe (33 aa).

Cys-27 and Cys-33 are oxidised to a cystine.

In terms of tissue distribution, expressed by the skin glands.

The protein resides in the secreted. In terms of biological role, has antibacterial activity against the Gram-positive bacterium S.aureus ATCC 25923 (MIC=36 uM) and the Gram-negative bacterium E.coli ATCC 25726 (MIC=18 uM). This chain is Brevinin-2PTe, found in Pulchrana picturata (Malaysian fire frog).